The primary structure comprises 427 residues: cAMP-dependent protein kinase regulatory subunit (427 aa).

The interval 38–184 (QFCSNFFIRK…RIKVSISNNF (147 aa)) is dimerization and phosphorylation. The tract at residues 96–145 (TTHMGHPNDHGALHDDDDDPLEDEDDEEFDKFSTEPLPSLPPTNYNRGRR) is disordered. Residues 110 to 124 (DDDDDPLEDEDDEEF) are compositionally biased toward acidic residues. A Phosphoserine modification is found at serine 147. 3',5'-cyclic AMP-binding positions include 185–300 (LFRN…FLSE), glutamate 250, arginine 259, 303–422 (LLKS…YHAV), glutamate 372, and arginine 381.

This sequence belongs to the cAMP-dependent kinase regulatory chain family. Tetramer, composed of 2 regulatory (R) and 2 catalytic (C) subunits. In the presence of cAMP it dissociates into 2 active monomeric C subunits and an R dimer.

The sequence is that of cAMP-dependent protein kinase regulatory subunit (pkar) from Mucor circinelloides f. lusitanicus (Mucor racemosus var. lusitanicus).